The following is a 354-amino-acid chain: Uroporphyrinogen decarboxylase (354 aa).

Residues 27–31 (RQAGR), Asp-77, Tyr-154, Thr-209, and His-327 contribute to the substrate site.

It belongs to the uroporphyrinogen decarboxylase family. Homodimer.

It is found in the cytoplasm. It carries out the reaction uroporphyrinogen III + 4 H(+) = coproporphyrinogen III + 4 CO2. Its pathway is porphyrin-containing compound metabolism; protoporphyrin-IX biosynthesis; coproporphyrinogen-III from 5-aminolevulinate: step 4/4. Catalyzes the decarboxylation of four acetate groups of uroporphyrinogen-III to yield coproporphyrinogen-III. The polypeptide is Uroporphyrinogen decarboxylase (Edwardsiella ictaluri (strain 93-146)).